Reading from the N-terminus, the 238-residue chain is Probable transcriptional regulatory protein STER_0242 (238 aa).

Belongs to the TACO1 family. YeeN subfamily.

The protein resides in the cytoplasm. This is Probable transcriptional regulatory protein STER_0242 from Streptococcus thermophilus (strain ATCC BAA-491 / LMD-9).